Consider the following 206-residue polypeptide: Ribosome maturation factor RimP (206 aa).

Positions 164 to 206 (GGIPEGRAVPSDAVDLTDDSGVDSVEDDEAELEDVENEEGFDK) are disordered. The span at 178 to 206 (DLTDDSGVDSVEDDEAELEDVENEEGFDK) shows a compositional bias: acidic residues.

This sequence belongs to the RimP family.

The protein resides in the cytoplasm. In terms of biological role, required for maturation of 30S ribosomal subunits. This chain is Ribosome maturation factor RimP, found in Rhodococcus erythropolis (strain PR4 / NBRC 100887).